Here is a 1030-residue protein sequence, read N- to C-terminus: MEIIKENNENDGENINNIPKKKSGSKRQLSFKKKWKASFKKNDFVNSHGINYNKSVGVGGNSGMPQRRNSIVAKPIGLTSYKINHNHNYQSQKLTWKYTSPTNSSLNLKNSDLKYLNNENKNISDNSNFDDGEEDDTDNKKNINNKNNNNNNPLTDIINIEEKIANTTTTTTNTTTINTETKNDIDTTISKLNNFYDNDETNNNIQNETDGNNNNSFSISNNLIIKEKNNNNNKNDNGDSDDDEDCKIIILDKPHIENLNDKNKQILSQPHTLTQPLTPTSNNTHKSTLFKKLELPPAPPSPPQPPVFQNLNNCDNIIQHQLENNCDAKNKSINIYNNEFDFKNNNNNIIENNENFEKNLNLLNNNNNFYHNNNLKKSKDNILKKSNNNINNINNININNNNNNNKKSKSKIKIFKKLLNNNIDRLNKNNMDNVLMKSQIIQINGAEIDDGNNYFNKNDQQHIEDNLMFLNETSQTNNATCEIDNLIDSIKINLSNGYFIAGQKVTGNLEISLNQDIKTSGLNLKWKVFEHVIINHYQSPQSPQKLNKKDKEKEKEKEKENDNDNENNNSESLIRDQSFELIDASSLKSFSNSSNCGSSLRNSQSINLNNYNFNNYKGGTLKKNSKIFNVLKNSSSITNFLKINPLTSSSSDFSLNSSSNYNLNLFNENRLIYKNQEKKTIYESGDSIFQTDDNGGIMNSGLHIIPFSFLLPSHLPSSFSDFTIDKETNEKILSAIIYKLSISFQDILYEEEDNDENNNNNFYNQHDDNEDNENIRNKKEYLKSLYELLKDYKIKKSFTVCEPSIIAAKVNEIPIRMEKKKSFLVNSGQISLKVALKRTIFFANEKIPINIKIENASSRSIDYILISIKKIQNISLSLIKKSKNNNEKQQQQIEKDNDEQQPNITDLTLSPSSSSFLSNSSNTSSSKNNNNNNNNLIFKKCTFKTSQRFNGVDAHCNFSDTILFDTNEIKGFNQTTNGTLIKCHYNIVIQCFVKRAFNVVCRIPILFGALPENNLTSIFNDEYQLNLLNM.

2 disordered regions span residues 1–27 and 119–154; these read MEII…GSKR and ENKN…NNPL. Residues 128-137 are compositionally biased toward acidic residues; that stretch reads NFDDGEEDDT. Low complexity predominate over residues 142–152; the sequence is NINNKNNNNNN. Coiled-coil stretches lie at residues 320 to 374 and 544 to 577; these read HQLE…HNNN and QKLN…IRDQ. Disordered stretches follow at residues 539–572 and 885–931; these read SPQS…NSES and NNEK…NNNN. Over residues 547-562 the composition is skewed to basic and acidic residues; it reads NKKDKEKEKEKEKEND. Positions 910–931 are enriched in low complexity; sequence SPSSSSFLSNSSNTSSSKNNNN.

It belongs to the arrestin family.

This chain is Arrestin domain-containing protein F (adcF), found in Dictyostelium discoideum (Social amoeba).